The sequence spans 311 residues: Glutaminase (311 aa).

Serine 69, asparagine 120, glutamate 164, asparagine 171, tyrosine 195, tyrosine 247, and valine 265 together coordinate substrate.

The protein belongs to the glutaminase family. As to quaternary structure, homotetramer.

It catalyses the reaction L-glutamine + H2O = L-glutamate + NH4(+). This chain is Glutaminase, found in Colwellia psychrerythraea (strain 34H / ATCC BAA-681) (Vibrio psychroerythus).